Consider the following 1248-residue polypeptide: Cullin-associated NEDD8-dissociated protein 1 (1248 aa).

HEAT repeat units follow at residues 44–82 (DESEKKVVRMVLKLLEDKNGEVQNLAVKCLGPLVNKVKE), 127–165 (PNVCQRITGKLSTAIEKEDVSVKLESLDILADLLSRFGE), 168–206 (VPFHSTILKALMPQLASSRQAVRKRTIVALSFLLIQANS), 365–403 (EDFYRSLSPALIARFKEREENVKSDIFHAYVALLKNTRL), 425–463 (IEQLPLIVKAIQPLMREKSMKTRQDCFLLLRELLNSLPG), 510–548 (HPHIPLLVPLVVTSVFDPFYKIATEALLVLQQLVKVIRP), 604–642 (QNELAVCLPIFMERLKNEVTRLSSVKALTLIAASSLRID), 644–682 (TPILHDVLPALGTFLRKNHRALKLHSLDLINKIVINYSS), 861–900 (DLSSIQVLPQTIIECFGATSEDVKAAASHALGAVSVGSLQ), 976–1014 (LVNPDELLPQLQQALRSESATMRTVVVSSVKFTISDQPQ), and 1054–1093 (PSLVRDLLPTLLPWLYSETKVKSELIREVEMGPFKHTVDD).

The protein belongs to the CAND family.

In terms of biological role, key assembly factor of SCF (SKP1-CUL1-F-box protein) E3 ubiquitin ligase complexes that promotes the exchange of the substrate-recognition F-box subunit in SCF complexes, thereby playing a key role in the cellular repertoire of SCF complexes. Acts as a F-box protein exchange factor. Probably plays a similar role in other cullin-RING E3 ubiquitin ligase complexes. The chain is Cullin-associated NEDD8-dissociated protein 1 (Cand1) from Drosophila melanogaster (Fruit fly).